A 290-amino-acid polypeptide reads, in one-letter code: MLKDIFTKKKKYASVPSEQAKHDVPEGIMTKCPKCKKIMLTKELDKNLRVCMNCGHHFPMNAKQRIESLLDEDSFEEFNQGMISENPLGFPEYLEKIEKDREKTSLNEAVVTGKGTISGFPAVIAIMDSTFRMGSMGSVVGEKITLAIEKAKEEKVPFIIFTASGGARMQEGVLSLMQMAKTSSALKLFSEEQGLIISVMTHPTTGGVSASFASLGDYNFAEPGTLIGFAGRRIIEQTIGEKLPEDFQTAEFLLKHGQLDAVIHRNDMKDKLAFLLDMHQTGGEYEWLQD.

The CoA carboxyltransferase N-terminal domain maps to 28–290 (IMTKCPKCKK…TGGEYEWLQD (263 aa)). Zn(2+)-binding residues include cysteine 32, cysteine 35, cysteine 51, and cysteine 54. The C4-type zinc-finger motif lies at 32-54 (CPKCKKIMLTKELDKNLRVCMNC).

Belongs to the AccD/PCCB family. Acetyl-CoA carboxylase is a heterohexamer composed of biotin carboxyl carrier protein (AccB), biotin carboxylase (AccC) and two subunits each of ACCase subunit alpha (AccA) and ACCase subunit beta (AccD). Zn(2+) is required as a cofactor.

It is found in the cytoplasm. The enzyme catalyses N(6)-carboxybiotinyl-L-lysyl-[protein] + acetyl-CoA = N(6)-biotinyl-L-lysyl-[protein] + malonyl-CoA. It participates in lipid metabolism; malonyl-CoA biosynthesis; malonyl-CoA from acetyl-CoA: step 1/1. Functionally, component of the acetyl coenzyme A carboxylase (ACC) complex. Biotin carboxylase (BC) catalyzes the carboxylation of biotin on its carrier protein (BCCP) and then the CO(2) group is transferred by the transcarboxylase to acetyl-CoA to form malonyl-CoA. The protein is Acetyl-coenzyme A carboxylase carboxyl transferase subunit beta of Bacillus velezensis (strain DSM 23117 / BGSC 10A6 / LMG 26770 / FZB42) (Bacillus amyloliquefaciens subsp. plantarum).